The chain runs to 545 residues: Prolyl 3-hydroxylase OGFOD1 (545 aa).

Positions 1-23 are disordered; it reads MNGKRPADPGPARPMKKGKKQVS. Residues 137 to 239 enclose the Fe2OG dioxygenase domain; it reads PTIDMSCAKY…RLSISGWFYG (103 aa). H155 and D157 together coordinate Fe cation. Position 169 (Y169) interacts with 2-oxoglutarate. A Fe cation-binding site is contributed by H218. R230 lines the 2-oxoglutarate pocket. Residues 371-380 are compositionally biased toward acidic residues; the sequence is SEDDETEEKG. The segment at 371-437 is disordered; the sequence is SEDDETEEKG…EAKKESSVPM (67 aa). Over residues 383 to 393 the composition is skewed to low complexity; that stretch reads ETASAAAGTEE. Positions 402–417 are enriched in polar residues; sequence PENNQVAAGSHSQENG.

Belongs to the TPA1 family. As to quaternary structure, monomer. Fe(2+) serves as cofactor. It depends on L-ascorbate as a cofactor.

The protein localises to the cytoplasm. It localises to the nucleus. It carries out the reaction [ribosomal protein uS12]-L-proline + 2-oxoglutarate + O2 = [ribosomal protein uS12]-(3S)-3-hydroxy-L-proline + succinate + CO2. Functionally, prolyl 3-hydroxylase that catalyzes 3-hydroxylation of 'Pro-62' of small ribosomal subunit uS12 (RPS23), thereby regulating protein translation termination efficiency. Involved in stress granule formation. The sequence is that of Prolyl 3-hydroxylase OGFOD1 (Ogfod1) from Mus musculus (Mouse).